The sequence spans 356 residues: Carbamoyl phosphate synthase small chain (356 aa).

The interval 1-160 (MKGYLKLEDG…TKKPYRIAGI (160 aa)) is CPSase. L-glutamine is bound by residues Ser-45, Gly-211, and Gly-213. Positions 163–350 (KLAFIDLGTK…MDIVMVYKRR (188 aa)) constitute a Glutamine amidotransferase type-1 domain. Cys-238 functions as the Nucleophile in the catalytic mechanism. L-glutamine contacts are provided by Leu-239, Gln-242, Asn-280, Gly-282, and Tyr-283. Active-site residues include His-323 and Glu-325.

Belongs to the CarA family. Composed of two chains; the small (or glutamine) chain promotes the hydrolysis of glutamine to ammonia, which is used by the large (or ammonia) chain to synthesize carbamoyl phosphate. Tetramer of heterodimers (alpha,beta)4.

It catalyses the reaction hydrogencarbonate + L-glutamine + 2 ATP + H2O = carbamoyl phosphate + L-glutamate + 2 ADP + phosphate + 2 H(+). The enzyme catalyses L-glutamine + H2O = L-glutamate + NH4(+). It functions in the pathway amino-acid biosynthesis; L-arginine biosynthesis; carbamoyl phosphate from bicarbonate: step 1/1. The protein operates within pyrimidine metabolism; UMP biosynthesis via de novo pathway; (S)-dihydroorotate from bicarbonate: step 1/3. Small subunit of the glutamine-dependent carbamoyl phosphate synthetase (CPSase). CPSase catalyzes the formation of carbamoyl phosphate from the ammonia moiety of glutamine, carbonate, and phosphate donated by ATP, constituting the first step of 2 biosynthetic pathways, one leading to arginine and/or urea and the other to pyrimidine nucleotides. The small subunit (glutamine amidotransferase) binds and cleaves glutamine to supply the large subunit with the substrate ammonia. The sequence is that of Carbamoyl phosphate synthase small chain from Caldanaerobacter subterraneus subsp. tengcongensis (strain DSM 15242 / JCM 11007 / NBRC 100824 / MB4) (Thermoanaerobacter tengcongensis).